The chain runs to 146 residues: Hemoglobin subunit beta (146 aa).

One can recognise a Globin domain in the interval F2 to H146. At S44 the chain carries Phosphoserine. N6-acetyllysine is present on K59. H63 serves as a coordination point for heme b. K82 carries the post-translational modification N6-acetyllysine. H92 contributes to the heme b binding site. S-nitrosocysteine is present on C93. At K144 the chain carries N6-acetyllysine.

The protein belongs to the globin family. Heterotetramer of two alpha chains and two beta chains. As to expression, red blood cells.

Its function is as follows. Involved in oxygen transport from the lung to the various peripheral tissues. This Proteles cristata (Aardwolf) protein is Hemoglobin subunit beta (HBB).